We begin with the raw amino-acid sequence, 468 residues long: Putative chitinase 1 (468 aa).

Residues 1 to 21 form the signal peptide; the sequence is MDFYSSLLPFLILIYLEFCSG. In terms of domain architecture, GH18 spans 22–381; it reads FNRVCYYNGW…MSIIHGLGEY (360 aa). Cys26 and Cys51 are disulfide-bonded. Chitin contacts are provided by residues 73 to 74 and 100 to 103; these read VF and GGWD. Glu143 acts as the Proton donor in catalysis. Chitin-binding positions include Tyr144, 213 to 216, and Trp353; that span reads KMYD. Residues 386-440 are a coiled coil; the sequence is SDTLEAEREMINKKIRKAAREISYYSDKGNSTMAKKMEDKLNQLKDHLSAVQAHQ.

The protein belongs to the glycosyl hydrolase 18 family. Prismatic layer of shell (at protein level). Expressed primarily in the mantle with highest level in the outer epithelium of the mantle edge and lower level in the mantle pallium.

It is found in the secreted. It carries out the reaction Random endo-hydrolysis of N-acetyl-beta-D-glucosaminide (1-&gt;4)-beta-linkages in chitin and chitodextrins.. The protein is Putative chitinase 1 of Margaritifera margaritifera (Freshwater pearl mussel).